We begin with the raw amino-acid sequence, 31 residues long: Glucagon-5 (31 aa).

The protein belongs to the glucagon family.

It is found in the secreted. Functionally, glucagon plays a key role in glucose metabolism and homeostasis. Regulates blood glucose by increasing gluconeogenesis and decreasing glycolysis. The polypeptide is Glucagon-5 (Huso dauricus (Kaluga sturgeon)).